Consider the following 36-residue polypeptide: Trypsin inhibitor 2 (36 aa).

3 disulfides stabilise this stretch: Cys3-Cys20, Cys10-Cys24, and Cys19-Cys35.

In terms of biological role, trypsin inhibitor. This chain is Trypsin inhibitor 2, found in Spinacia oleracea (Spinach).